Consider the following 516-residue polypeptide: HMG box-containing protein 1 (516 aa).

A disordered region spans residues 150-182 (ARPPPVSSSSKSGPAFPHDHWKEETPVRHERAN). The span at 156–165 (SSSSKSGPAF) shows a compositional bias: low complexity. The segment covering 166–182 (PHDHWKEETPVRHERAN) has biased composition (basic and acidic residues). One can recognise an AXH domain in the interval 203–345 (WCNSWPSTIW…PPGHPDAINF (143 aa)). A DNA-binding region (HMG box) is located at residues 436-504 (CKRPMNAFML…EQKRLNPDCW (69 aa)).

As to quaternary structure, binds TCF4. Binds RB1. Binds the second PAH repeat of SIN3A. In terms of processing, ubiquitinated by the CTLH E3 ubiquitin-protein ligase complex, leading to subsequent proteasomal degradation.

Its subcellular location is the nucleus. In terms of biological role, transcriptional repressor that binds to the promoter region of target genes. Plays a role in the regulation of the cell cycle and of the Wnt pathway. Binds preferentially to the sequence 5'-TTCATTCATTCA-3'. Binding to the histone H1.0 promoter is enhanced by interaction with RB1. Disrupts the interaction between DNA and TCF4. This chain is HMG box-containing protein 1 (Hbp1), found in Mus musculus (Mouse).